The primary structure comprises 222 residues: MKIPPICCVITQLPQAETLKKSEGAAFYELRLDLLGENWRETAVLLNKPFMATCRRSAEGGSFKGNEAERINRLEKAASAGAFMLDIEYSTPNLEEVLGRLRPQAKCLLSHHNFTDTPSAAKLKTLLKDMLTHQADIYKVITTATSINDNINLLNLTKEIPDKKIVAFAMGEPGILSRILCPLAGSPFTYASLNDGNKSASGQMTLAQMIEIYRSVNYANHT.

Residues 29–31 (ELR) and arginine 55 each bind 3-dehydroquinate. Histidine 112 (proton donor/acceptor) is an active-site residue. Lysine 139 serves as the catalytic Schiff-base intermediate with substrate. The 3-dehydroquinate site is built by arginine 178, serine 199, and glutamine 203.

Belongs to the type-I 3-dehydroquinase family. As to quaternary structure, homodimer.

It catalyses the reaction 3-dehydroquinate = 3-dehydroshikimate + H2O. It participates in metabolic intermediate biosynthesis; chorismate biosynthesis; chorismate from D-erythrose 4-phosphate and phosphoenolpyruvate: step 3/7. In terms of biological role, involved in the third step of the chorismate pathway, which leads to the biosynthesis of aromatic amino acids. Catalyzes the cis-dehydration of 3-dehydroquinate (DHQ) and introduces the first double bond of the aromatic ring to yield 3-dehydroshikimate. This chain is 3-dehydroquinate dehydratase, found in Dehalococcoides mccartyi (strain ATCC BAA-2100 / JCM 16839 / KCTC 5957 / BAV1).